We begin with the raw amino-acid sequence, 328 residues long: Malate dehydrogenase (328 aa).

Glycine 12–glycine 18 is an NAD(+) binding site. Residues arginine 95 and arginine 101 each coordinate substrate. NAD(+) contacts are provided by residues asparagine 108, glutamine 115, and valine 132–asparagine 134. Substrate-binding residues include asparagine 134 and arginine 165. Residue histidine 190 is the Proton acceptor of the active site.

It belongs to the LDH/MDH superfamily. MDH type 2 family.

It carries out the reaction (S)-malate + NAD(+) = oxaloacetate + NADH + H(+). Catalyzes the reversible oxidation of malate to oxaloacetate. This Paracidovorax citrulli (strain AAC00-1) (Acidovorax citrulli) protein is Malate dehydrogenase.